A 432-amino-acid chain; its full sequence is Glutamate-1-semialdehyde 2,1-aminomutase (432 aa).

N6-(pyridoxal phosphate)lysine is present on K271.

It belongs to the class-III pyridoxal-phosphate-dependent aminotransferase family. HemL subfamily. As to quaternary structure, homodimer. The cofactor is pyridoxal 5'-phosphate.

It localises to the cytoplasm. The catalysed reaction is (S)-4-amino-5-oxopentanoate = 5-aminolevulinate. It participates in porphyrin-containing compound metabolism; protoporphyrin-IX biosynthesis; 5-aminolevulinate from L-glutamyl-tRNA(Glu): step 2/2. The protein operates within porphyrin-containing compound metabolism; chlorophyll biosynthesis. This Prochlorococcus marinus (strain MIT 9211) protein is Glutamate-1-semialdehyde 2,1-aminomutase.